Consider the following 299-residue polypeptide: tRNA dimethylallyltransferase 2 (299 aa).

Residue 9 to 16 (GPTGVGKT) coordinates ATP. 11–16 (TGVGKT) provides a ligand contact to substrate. Positions 34–37 (DSRQ) are interaction with substrate tRNA.

Belongs to the IPP transferase family. As to quaternary structure, monomer. The cofactor is Mg(2+).

It catalyses the reaction adenosine(37) in tRNA + dimethylallyl diphosphate = N(6)-dimethylallyladenosine(37) in tRNA + diphosphate. Functionally, catalyzes the transfer of a dimethylallyl group onto the adenine at position 37 in tRNAs that read codons beginning with uridine, leading to the formation of N6-(dimethylallyl)adenosine (i(6)A). The sequence is that of tRNA dimethylallyltransferase 2 from Parabacteroides distasonis (strain ATCC 8503 / DSM 20701 / CIP 104284 / JCM 5825 / NCTC 11152).